Reading from the N-terminus, the 196-residue chain is DNA replication complex GINS protein PSF1 (196 aa).

The protein belongs to the GINS1/PSF1 family. Component of the GINS complex which is a heterotetramer of GINS1, GINS2, GINS3 and GINS4. Forms a stable subcomplex with GINS4. GINS complex interacts with DNA primase in vitro. Component of the CMG helicase complex, a hexameric ring of related MCM2-7 subunits stabilized by CDC45 and the tetrameric GINS complex.

The protein localises to the nucleus. The protein resides in the chromosome. Functionally, required for correct functioning of the GINS complex, a complex that plays an essential role in the initiation of DNA replication, and progression of DNA replication forks. GINS complex is a core component of CDC45-MCM-GINS (CMG) helicase, the molecular machine that unwinds template DNA during replication, and around which the replisome is built. This Bos taurus (Bovine) protein is DNA replication complex GINS protein PSF1 (GINS1).